The chain runs to 123 residues: Putative membrane protein insertion efficiency factor (123 aa).

Belongs to the UPF0161 family.

It is found in the cell inner membrane. Could be involved in insertion of integral membrane proteins into the membrane. This is Putative membrane protein insertion efficiency factor from Beijerinckia indica subsp. indica (strain ATCC 9039 / DSM 1715 / NCIMB 8712).